The primary structure comprises 95 residues: Phosphoribosyl-ATP pyrophosphatase (95 aa).

This sequence belongs to the PRA-PH family.

It is found in the cytoplasm. The catalysed reaction is 1-(5-phospho-beta-D-ribosyl)-ATP + H2O = 1-(5-phospho-beta-D-ribosyl)-5'-AMP + diphosphate + H(+). It functions in the pathway amino-acid biosynthesis; L-histidine biosynthesis; L-histidine from 5-phospho-alpha-D-ribose 1-diphosphate: step 2/9. In Methanocella arvoryzae (strain DSM 22066 / NBRC 105507 / MRE50), this protein is Phosphoribosyl-ATP pyrophosphatase.